The chain runs to 693 residues: Kinesin-like protein KIFC1 (693 aa).

Disordered stretches follow at residues 1-24 (MRGR…VRTT) and 48-156 (VKSS…KRPA). Low complexity-rich tracts occupy residues 49 to 59 (KSSSRLPLPGS) and 127 to 138 (QKPAPAAPAQKP). Phosphoserine occurs at positions 52 and 59. Residues 165–334 (DLHEELKQYR…QELKGNIRVF (170 aa)) adopt a coiled-coil conformation. The 354-residue stretch at 330-683 (NIRVFCRVRP…LRFASKVNQC (354 aa)) folds into the Kinesin motor domain. Thr379 bears the Phosphothreonine mark. Residue 430–437 (GQTGSGKT) participates in ATP binding.

Belongs to the TRAFAC class myosin-kinesin ATPase superfamily. Kinesin family. NCD subfamily. As to quaternary structure, binds NUBP1 and NUBP2. Interacts with PPP1R42.

The protein resides in the nucleus. It is found in the cytoplasm. Its subcellular location is the cytoskeleton. The protein localises to the microtubule organizing center. It localises to the centrosome. The protein resides in the spindle. It is found in the early endosome. In terms of biological role, minus end-directed microtubule-dependent motor required for bipolar spindle formation. May contribute to movement of early endocytic vesicles. Regulates cilium formation and structure. The chain is Kinesin-like protein KIFC1 from Rattus norvegicus (Rat).